The primary structure comprises 289 residues: Tumor necrosis factor receptor superfamily member 5 (289 aa).

An N-terminal signal peptide occupies residues 1-19; it reads MVSLPRLCALWGCLLTAVH. Residues 20–193 are Extracellular-facing; that stretch reads LGQCVTCSDK…VICGLKSRMR (174 aa). TNFR-Cys repeat units follow at residues 25-60, 61-103, 104-144, and 145-187; these read TCSD…TQCH, PCDS…DTVC, TCKE…TVCH, and PCPV…VICG. Disulfide bonds link C26-C37, C38-C51, C41-C59, C62-C77, C83-C103, C105-C119, C111-C116, and C125-C143. Residue N153 is glycosylated (N-linked (GlcNAc...) asparagine). The helical transmembrane segment at 194-215 threads the bilayer; the sequence is ALLVIPVVMGILITIFGVFLYI. Residues 216–289 lie on the Cytoplasmic side of the membrane; sequence KKVVKKPKDN…TDSIALRPLV (74 aa). Positions 228–251 are disordered; sequence LPPAARRQDPQEMEDYPGHNTAAP.

In terms of assembly, monomer and homodimer. Interacts with TRAF1, TRAF2 and TRAF6. Interacts with TRAF3 and TRAF5. Interacts with TRAF6 and MAP3K8; the interaction is required for ERK activation.

The protein localises to the cell membrane. Its subcellular location is the secreted. Functionally, receptor for TNFSF5/CD40LG. Transduces TRAF6- and MAP3K8-mediated signals that activate ERK in macrophages and B cells, leading to induction of immunoglobulin secretion. The protein is Tumor necrosis factor receptor superfamily member 5 (Cd40) of Mus musculus (Mouse).